We begin with the raw amino-acid sequence, 433 residues long: Legumain (433 aa).

The signal sequence occupies residues 1-17 (MIWEFTVLLSLVLGTGA). Residues 18–25 (VPLEDPED) constitute a propeptide that is removed on maturation. N91 carries N-linked (GlcNAc...) asparagine glycosylation. The active site involves H148. An N-linked (GlcNAc...) asparagine glycan is attached at N167. C189 functions as the Nucleophile in the catalytic mechanism. N-linked (GlcNAc...) asparagine glycosylation is found at N263 and N272. Positions 324-433 (DLQESRRLVQ…SMNKVCHGYY (110 aa)) are excised as a propeptide. Intrachain disulfides connect C378–C412 and C390–C429.

The protein belongs to the peptidase C13 family. In terms of assembly, homodimer before autocatalytic removal of the propeptide. Monomer after autocatalytic processing. May interact with integrins. Activated by autocatalytic processing at pH 4. As to expression, detected in kidney (at protein level).

It is found in the lysosome. It catalyses the reaction Hydrolysis of proteins and small molecule substrates at -Asn-|-Xaa- bonds.. Functionally, has a strict specificity for hydrolysis of asparaginyl bonds. Can also cleave aspartyl bonds slowly, especially under acidic conditions. Involved in the processing of proteins for MHC class II antigen presentation in the lysosomal/endosomal system. Also involved in MHC class I antigen presentation in cross-presenting dendritic cells by mediating cleavage and maturation of Perforin-2 (MPEG1), thereby promoting antigen translocation in the cytosol. Required for normal lysosomal protein degradation in renal proximal tubules. Required for normal degradation of internalized EGFR. Plays a role in the regulation of cell proliferation via its role in EGFR degradation. The protein is Legumain (LGMN) of Bos taurus (Bovine).